Reading from the N-terminus, the 389-residue chain is Probable transcription factor FL (389 aa).

Disordered regions lie at residues 1–41 (MDPN…ANVP) and 140–226 (EHDM…HPFV). Residues 19 to 39 (PPAPAPVPPPPPPPPPPPPAN) show a composition bias toward pro residues. The segment covering 159–180 (VTGKKQAKKGSAARKGKKARRK) has biased composition (basic residues). Residues 161 to 168 (GKKQAKKG) carry the Nuclear localization signal motif. The span at 190–201 (QEDEMDCCDEDG) shows a compositional bias: acidic residues. DNA-binding regions lie at residues 221 to 225 (REHPF), 290 to 297 (NKPKMRHY), and 361 to 364 (YVPT).

It belongs to the FLO/LFY family. In terms of assembly, interacts with APO1. As to expression, in very young panicle but not in mature florets, mature leaves, roots or apical meristems.

It localises to the nucleus. Probable transcription factor. Together with APO1, involved in the temporal regulation of meristem size and identity during both vegetative and reproductive developments through interaction with APO1. Promotes flowering. The protein is Probable transcription factor FL of Oryza sativa subsp. japonica (Rice).